Reading from the N-terminus, the 183-residue chain is Potassium-transporting ATPase KdpC subunit (183 aa).

A helical membrane pass occupies residues 10–30 (LTVFTLILFAVIYPLAIYGIA).

The protein belongs to the KdpC family. In terms of assembly, the system is composed of three essential subunits: KdpA, KdpB and KdpC.

The protein localises to the cell inner membrane. Functionally, part of the high-affinity ATP-driven potassium transport (or Kdp) system, which catalyzes the hydrolysis of ATP coupled with the electrogenic transport of potassium into the cytoplasm. This subunit acts as a catalytic chaperone that increases the ATP-binding affinity of the ATP-hydrolyzing subunit KdpB by the formation of a transient KdpB/KdpC/ATP ternary complex. The sequence is that of Potassium-transporting ATPase KdpC subunit from Flavobacterium johnsoniae (strain ATCC 17061 / DSM 2064 / JCM 8514 / BCRC 14874 / CCUG 350202 / NBRC 14942 / NCIMB 11054 / UW101) (Cytophaga johnsonae).